A 152-amino-acid chain; its full sequence is 3-dehydroquinate dehydratase (152 aa).

Residue Y23 is the Proton acceptor of the active site. N75, H81, and D88 together coordinate substrate. The active-site Proton donor is H101. Substrate contacts are provided by residues 102–103 (IS) and R112.

Belongs to the type-II 3-dehydroquinase family. As to quaternary structure, homododecamer.

The enzyme catalyses 3-dehydroquinate = 3-dehydroshikimate + H2O. It participates in metabolic intermediate biosynthesis; chorismate biosynthesis; chorismate from D-erythrose 4-phosphate and phosphoenolpyruvate: step 3/7. In terms of biological role, catalyzes a trans-dehydration via an enolate intermediate. The sequence is that of 3-dehydroquinate dehydratase from Alkalilimnicola ehrlichii (strain ATCC BAA-1101 / DSM 17681 / MLHE-1).